The sequence spans 730 residues: 1,4-alpha-glucan branching enzyme GlgB (730 aa).

Aspartate 405 (nucleophile) is an active-site residue. Catalysis depends on glutamate 458, which acts as the Proton donor.

It belongs to the glycosyl hydrolase 13 family. GlgB subfamily. In terms of assembly, monomer.

It catalyses the reaction Transfers a segment of a (1-&gt;4)-alpha-D-glucan chain to a primary hydroxy group in a similar glucan chain.. The protein operates within glycan biosynthesis; glycogen biosynthesis. Catalyzes the formation of the alpha-1,6-glucosidic linkages in glycogen by scission of a 1,4-alpha-linked oligosaccharide from growing alpha-1,4-glucan chains and the subsequent attachment of the oligosaccharide to the alpha-1,6 position. The protein is 1,4-alpha-glucan branching enzyme GlgB of Haemophilus influenzae (strain PittGG).